The chain runs to 74 residues: Peptide BmKa2 (74 aa).

The signal sequence occupies residues 1 to 24 (MSSKTLLVLLLVGVLVSTFFTADA).

Belongs to the non-disulfide-bridged peptide (NDBP) superfamily. Long chain multifunctional peptide (group 2) family. As to expression, expressed by the venom gland.

The protein resides in the secreted. Highly acidic peptide that may have antibacterial activity. This chain is Peptide BmKa2, found in Olivierus martensii (Manchurian scorpion).